A 368-amino-acid polypeptide reads, in one-letter code: Metacaspase-6 (368 aa).

Active-site residues include H86 and C139. S-nitrosocysteine is present on C139. A disordered region spans residues 153 to 174 (GESTKKKKDSGDSSTINKETEA).

It belongs to the peptidase C14B family. Post-translationally, proteolytically processed; by an autocatalytic mechanism. As to expression, expressed in roots and flower buds.

The protein is Metacaspase-6 (AMC6) of Arabidopsis thaliana (Mouse-ear cress).